Consider the following 376-residue polypeptide: Arf-GAP with dual PH domain-containing protein 2 (376 aa).

The Arf-GAP domain maps to 9-130 (KRLLELLQAA…EFMAEKAVSP (122 aa)). The C4-type zinc finger occupies 25 to 48 (CADCGAADPDWASYKLGVFICLHC). PH domains follow at residues 131–232 (PGDR…AARL) and 254–360 (NYLK…GVLS).

As to expression, expressed in many tissues, with highest levels in fat, heart and skeletal muscle. Also detected in kidney, liver and lung.

It is found in the cytoplasm. The protein resides in the cell membrane. Functionally, GTPase-activating protein for the ADP ribosylation factor family (Potential). Binds phosphatidylinositol 4,5-bisphosphate, phosphatidylinositol 3,4,5-trisphosphate (PtdInsP3) and inositol 1,3,4,5-tetrakisphosphate (InsP4). Binding of phosphatidylinositol 3,5-bisphosphate and phosphatidylinositol 3,4-bisphosphate occurs at a much lower affinity. Possesses a stoichiometry of two binding sites for InsP4 with identical affinity. The sequence is that of Arf-GAP with dual PH domain-containing protein 2 (Adap2) from Rattus norvegicus (Rat).